Reading from the N-terminus, the 441-residue chain is GTPase Der (441 aa).

2 consecutive EngA-type G domains span residues 4 to 169 and 178 to 353; these read PVVA…PDSS and PRVA…ENNS. GTP contacts are provided by residues 10-17, 57-61, 120-123, 184-191, 231-235, and 296-299; these read GRPNVGKS, DTGGI, NKVD, GKPNVGKS, DTAGL, and NKWD. The 85-residue stretch at 354–438 folds into the KH-like domain; that stretch reads MRVATGVLNE…ALKFITRERK (85 aa).

It belongs to the TRAFAC class TrmE-Era-EngA-EngB-Septin-like GTPase superfamily. EngA (Der) GTPase family. As to quaternary structure, associates with the 50S ribosomal subunit.

Its function is as follows. GTPase that plays an essential role in the late steps of ribosome biogenesis. In Agathobacter rectalis (strain ATCC 33656 / DSM 3377 / JCM 17463 / KCTC 5835 / VPI 0990) (Eubacterium rectale), this protein is GTPase Der.